The following is a 276-amino-acid chain: Tumor necrosis factor-inducible gene 6 protein (276 aa).

Residues 1–17 (MIILIYLFVLVWEEAQG) form the signal peptide. Residues 36 to 129 (GVYHREARSG…SERWDAYCYN (94 aa)) enclose the Link domain. Intrachain disulfides connect Cys58–Cys127, Cys82–Cys103, and Cys135–Cys161. Asn118 carries an N-linked (GlcNAc...) asparagine glycan. The CUB domain maps to 135–247 (CGGVFTDPKR…GGFQIKYVTV (113 aa)). Ca(2+) contacts are provided by Glu183, Asp191, Asp232, Ser234, and Val235. A disulfide bridge connects residues Cys188 and Cys210. Asn258 carries an N-linked (GlcNAc...) asparagine glycan.

Interacts (via Link domain) with inter-alpha-inhibitor (I-alpha-I) component bikunin. Interacts with ITIH2/HC2; this interaction is required for transesterification of the HC to hyaluronan. Interacts (via Link and CUB domains) with ITIH1. Chondroitin sulfate may be required for the stability of the complex. Interacts (via Link domain) with various C-X-C and C-C chemokines including PF4, CXCL8, CXCL11, CXCL12, CCL2, CCL7, CCL19, CCL21, and CCL27; this interaction interferes with chemokine binding to glycosaminoglycans. Interacts (primarily via Link domain) with BMP2; this interaction is inhibited by hyaluronan. Interacts (via both Link and CUB domains) with TNFSF11. Interacts (via CUB domain) with FN1 (via type III repeats 9-14); this interaction enhances fibronectin fibril assembly. TNFAIP6 may act as a bridging molecule between FN1 and THBS1. As to expression, vascular smooth muscle cells.

The protein localises to the secreted. Its function is as follows. Major regulator of extracellular matrix organization during tissue remodeling. Catalyzes the transfer of a heavy chain (HC) from inter-alpha-inhibitor (I-alpha-I) complex to hyaluronan. Cleaves the ester bond between the C-terminus of the HC and GalNAc residue of the chondroitin sulfate chain in I-alpha-I complex followed by transesterification of the HC to hyaluronan. In the process, potentiates the antiprotease function of I-alpha-I complex through release of free bikunin. Acts as a catalyst in the formation of hyaluronan-HC oligomers and hyaluronan-rich matrix surrounding the cumulus cell-oocyte complex, a necessary step for oocyte fertilization. Assembles hyaluronan in pericellular matrices that serve as platforms for receptor clustering and signaling. Enables binding of hyaluronan deposited on the surface of macrophages to LYVE1 on lymphatic endothelium and facilitates macrophage extravasation. Alters hyaluronan binding to functionally latent CD44 on vascular endothelium, switching CD44 into an active state that supports leukocyte rolling. Modulates the interaction of chemokines with extracellular matrix components and proteoglycans on endothelial cell surface, likely preventing chemokine gradient formation. In a negative feedback mechanism, may limit excessive neutrophil recruitment at inflammatory sites by antagonizing the association of CXCL8 with glycosaminoglycans on vascular endothelium. Has a role in osteogenesis and bone remodeling. Inhibits BMP2-dependent differentiation of mesenchymal stem cell to osteoblasts. Protects against bone erosion during inflammation by inhibiting TNFSF11/RANKL-dependent osteoclast activation. The polypeptide is Tumor necrosis factor-inducible gene 6 protein (TNFAIP6) (Oryctolagus cuniculus (Rabbit)).